The sequence spans 175 residues: CASP-like protein 2C1 (175 aa).

Residues 1–7 (MVRLRET) are Cytoplasmic-facing. Residues 8 to 28 (EVILRLCIVFFILLSSCLIGL) form a helical membrane-spanning segment. Over 29 to 51 (DSQTKEIAYIHKKVSFRYLLALE) the chain is Extracellular. A helical transmembrane segment spans residues 52–72 (AELYINVVVAAYNLVQIGLGW). Topologically, residues 73–91 (YNVEQKTSNPKWFSYLLDQ) are cytoplasmic. Residues 92–112 (TAAYVVFAGTSAAAQHSLLVV) form a helical membrane-spanning segment. Over 113 to 136 (TGSRELQWMKWCYKFTRFCFQMGS) the chain is Extracellular. Residues 137 to 157 (AIILNYIAAALMVLLSSISAF) form a helical membrane-spanning segment. Residues 158–175 (NLFRLYSPKRFFSFKSSS) are Cytoplasmic-facing.

This sequence belongs to the Casparian strip membrane proteins (CASP) family. Homodimer and heterodimers.

It localises to the cell membrane. The sequence is that of CASP-like protein 2C1 from Arabidopsis lyrata subsp. lyrata (Lyre-leaved rock-cress).